We begin with the raw amino-acid sequence, 278 residues long: Large ribosomal subunit protein uL2 (278 aa).

Positions 201-278 (HGNINDGKAG…IMRSRHQKKK (78 aa)) are disordered. Basic residues predominate over residues 210–221 (GRSRWRGKRPHV).

It belongs to the universal ribosomal protein uL2 family. In terms of assembly, part of the 50S ribosomal subunit. Forms a bridge to the 30S subunit in the 70S ribosome.

In terms of biological role, one of the primary rRNA binding proteins. Required for association of the 30S and 50S subunits to form the 70S ribosome, for tRNA binding and peptide bond formation. It has been suggested to have peptidyltransferase activity; this is somewhat controversial. Makes several contacts with the 16S rRNA in the 70S ribosome. This chain is Large ribosomal subunit protein uL2, found in Allorhizobium ampelinum (strain ATCC BAA-846 / DSM 112012 / S4) (Agrobacterium vitis (strain S4)).